The primary structure comprises 365 residues: Membrane cofactor protein (365 aa).

An N-terminal signal peptide occupies residues 1–44 (MTAAPLMPDSTHPCRRRKSYTFFWCSLGVYAEALLFLLSHLSDA). 4 consecutive Sushi domains span residues 45–106 (CELP…GCIK), 107–170 (VQCT…HCEK), 171–236 (IYCL…ECKV), and 237–296 (VKCP…KCLK). Topologically, residues 45–329 (CELPRPFEAM…GIFSQELDAW (285 aa)) are extracellular. 6 cysteine pairs are disulfide-bonded: Cys-109/Cys-151, Cys-137/Cys-168, Cys-173/Cys-221, Cys-202/Cys-234, Cys-239/Cys-281, and Cys-267/Cys-294. The N-linked (GlcNAc...) asparagine glycan is linked to Asn-181. Thr-205 carries an O-linked (GalNAc...) threonine glycan. 2 O-linked (GalNAc...) threonine glycosylation sites follow: Thr-301 and Thr-304. Residue Asn-310 is glycosylated (N-linked (GlcNAc...) asparagine). Residue Thr-312 is glycosylated (O-linked (GalNAc...) threonine). Residues 330–350 (IIALIVITSIVGVFILCLIVL) traverse the membrane as a helical segment. The Cytoplasmic portion of the chain corresponds to 351–365 (RCFEHRKKTNVSAAR).

Interacts with C3b. Interacts with C4b. Interacts with moesin/MSN. Post-translationally, may be O-glycosylated. In terms of processing, N-glycosylated. In terms of tissue distribution, present only in testis (at protein level).

Its subcellular location is the cytoplasmic vesicle. The protein resides in the secretory vesicle. It is found in the acrosome inner membrane. The protein localises to the secreted. May be involved in the fusion of the spermatozoa with the oocyte during fertilization. This chain is Membrane cofactor protein (Cd46), found in Mus musculus (Mouse).